The primary structure comprises 317 residues: Melanocyte-stimulating hormone receptor (317 aa).

The Extracellular portion of the chain corresponds to 1–37 (MPMQEPQRRLLDPFNSTRTGTPHLKLSANQTGPWCLH). Asparagine 15 and asparagine 29 each carry an N-linked (GlcNAc...) asparagine glycan. The helical transmembrane segment at 38-63 (VSIPDGLFLSLGLVSLVENVLVVISI) threads the bilayer. The Cytoplasmic portion of the chain corresponds to 64 to 72 (AKNRNLHSP). A helical membrane pass occupies residues 73-93 (MYYFICCLALSDLLVSVSIVL). At 94-118 (ETTLILVLEAGALATRVTVVQQLDN) the chain is on the extracellular side. A helical membrane pass occupies residues 119–140 (VIDVLICGSMVSSLCFLGAIAV). Residues 141-163 (DRYISIFYALRYHSIVTLPRARW) are Cytoplasmic-facing. The helical transmembrane segment at 164–183 (AIVAIWVASISSSTLFVAYY) threads the bilayer. Residues 184 to 191 (NHTAVLLC) lie on the Extracellular side of the membrane. A helical membrane pass occupies residues 192–211 (LVTFFLATLALMAVLYVHML). Residues 212–240 (ARAHQHAQAIAQLHKRQHLVHQGFRLKGA) are Cytoplasmic-facing. Residues 241-266 (ATLTILLGIFFLCWGPFFLYLTLIVL) form a helical membrane-spanning segment. Over 267 to 279 (CPKHPTCSCFFKN) the chain is Extracellular. The chain crosses the membrane as a helical span at residues 280–300 (LNLFLALIIFNSIVDPLIYAF). Residues 301–317 (RSQELRMTLKEVLLCSW) are Cytoplasmic-facing. Residue cysteine 315 is the site of S-palmitoyl cysteine attachment.

Belongs to the G-protein coupled receptor 1 family. As to quaternary structure, interacts with MGRN1, but does not undergo MGRN1-mediated ubiquitination; this interaction competes with GNAS-binding and thus inhibits agonist-induced cAMP production. Interacts with OPN3; the interaction results in a decrease in MC1R-mediated cAMP signaling and ultimately a decrease in melanin production in melanocytes.

The protein resides in the cell membrane. Its function is as follows. Receptor for MSH (alpha, beta and gamma) and ACTH. The activity of this receptor is mediated by G proteins which activate adenylate cyclase. Mediates melanogenesis, the production of eumelanin (black/brown) and phaeomelanin (red/yellow), via regulation of cAMP signaling in melanocytes. The sequence is that of Melanocyte-stimulating hormone receptor (MC1R) from Chaetodipus baileyi (Bailey's pocket mouse).